The primary structure comprises 141 residues: MLSAQERAQIAQVWDLIAGHEAQFGAELLLRLFTVYPSTKVYFPHLSACQDATQLLSHGQRMLAAVGAAVQHVDNLRAALSPLADLHALVLRVDPANFPLLIQCFHVVLASHLQDEFTVQMQAAWDKFLTGVAVVLTEKYR.

Positions 1 to 141 (MLSAQERAQI…VAVVLTEKYR (141 aa)) constitute a Globin domain. H58 and H87 together coordinate heme b.

This sequence belongs to the globin family. As to expression, expressed in erythroid tissues.

The chain is Hemoglobin subunit mu (HBM) from Homo sapiens (Human).